The following is a 502-amino-acid chain: 4,4'-diapophytoene desaturase (4,4'-diaponeurosporene-forming) (502 aa).

5–17 (VIGAGVTGLAAAA) is an FAD binding site.

Belongs to the carotenoid/retinoid oxidoreductase family. CrtN subfamily.

The catalysed reaction is 15-cis-4,4'-diapophytoene + 3 FAD + 3 H(+) = all-trans-4,4'-diaponeurosporene + 3 FADH2. The protein operates within carotenoid biosynthesis; staphyloxanthin biosynthesis; staphyloxanthin from farnesyl diphosphate: step 2/5. In terms of biological role, involved in the biosynthesis of the yellow-orange carotenoid staphyloxanthin, which plays a role in the virulence via its protective function against oxidative stress. Catalyzes three successive dehydrogenation reactions that lead to the introduction of three double bonds into 4,4'-diapophytoene (dehydrosqualene), with 4,4'-diapophytofluene and 4,4'-diapo-zeta-carotene as intermediates, and 4,4'-diaponeurosporene (the major deep-yellow pigment in staphylococci strains) as the end product. The polypeptide is 4,4'-diapophytoene desaturase (4,4'-diaponeurosporene-forming) (Staphylococcus aureus (strain bovine RF122 / ET3-1)).